Consider the following 426-residue polypeptide: Histone-binding protein RBBP7 (426 aa).

WD repeat units lie at residues 47–123 (QWLP…KINH), 129–174 (RARY…LRLR), 182–218 (GLSWNPNLSGNLLSASDDHTICLWDISGAPKEGKIVD), 229–270 (VVED…HSVD), 276–313 (VNCLSFNPYSEFILATGSADKTVALWDLRNLKLKLHSF), 319–370 (EIFQ…LFIH), and 377–404 (ISDFSWNPNEPWVICSVSEDNIMQVWQM).

It belongs to the WD repeat RBAP46/RBAP48/MSI1 family. Binds directly to helix 1 of the histone fold of histone H4, a region that is not accessible when H4 is in chromatin.

The protein resides in the nucleus. Functionally, core histone-binding subunit that may target chromatin remodeling factors, histone acetyltransferases and histone deacetylases to their histone substrates in a manner that is regulated by nucleosomal DNA. Component of several complexes which regulate chromatin metabolism. The polypeptide is Histone-binding protein RBBP7 (rbbp7) (Danio rerio (Zebrafish)).